The chain runs to 172 residues: Small ribosomal subunit protein uS5 (172 aa).

Residues 17 to 80 (LREKMISVNR…EQARRNMFKV (64 aa)) enclose the S5 DRBM domain.

Belongs to the universal ribosomal protein uS5 family. As to quaternary structure, part of the 30S ribosomal subunit. Contacts proteins S4 and S8.

Functionally, with S4 and S12 plays an important role in translational accuracy. Located at the back of the 30S subunit body where it stabilizes the conformation of the head with respect to the body. This chain is Small ribosomal subunit protein uS5, found in Burkholderia lata (strain ATCC 17760 / DSM 23089 / LMG 22485 / NCIMB 9086 / R18194 / 383).